Reading from the N-terminus, the 240-residue chain is Sec-independent protein translocase protein TatC (240 aa).

6 helical membrane-spanning segments follow: residues 15 to 35 (IISIIAFLIGSGIAFYFAKYV), 61 to 81 (LFILIKISLAVGFIIASPVIL), 103 to 123 (LLLGSILLFMLGALFAYFIVL), 152 to 172 (FVLKLVVAFGIAFEMPIVLYV), 191 to 211 (FIVIAFVIGAIIAPDVSTQVL), and 212 to 232 (MAIPLLLLYEISIFLGKLATR).

The protein belongs to the TatC family. Forms a complex with TatA.

Its subcellular location is the cell inner membrane. In terms of biological role, part of the twin-arginine translocation (Tat) system that transports large folded proteins containing a characteristic twin-arginine motif in their signal peptide across membranes. This Aquifex aeolicus (strain VF5) protein is Sec-independent protein translocase protein TatC.